The following is a 200-amino-acid chain: Probable molybdenum cofactor guanylyltransferase (200 aa).

Residues 9 to 11 (LAG), Lys21, Asp69, and Asp100 contribute to the GTP site. Asp100 is a Mg(2+) binding site.

It belongs to the MobA family. It depends on Mg(2+) as a cofactor.

Its subcellular location is the cytoplasm. The enzyme catalyses Mo-molybdopterin + GTP + H(+) = Mo-molybdopterin guanine dinucleotide + diphosphate. Its function is as follows. Transfers a GMP moiety from GTP to Mo-molybdopterin (Mo-MPT) cofactor (Moco or molybdenum cofactor) to form Mo-molybdopterin guanine dinucleotide (Mo-MGD) cofactor. In Bacillus thuringiensis (strain Al Hakam), this protein is Probable molybdenum cofactor guanylyltransferase.